We begin with the raw amino-acid sequence, 266 residues long: Energy-coupling factor transporter ATP-binding protein EcfA1 (266 aa).

Positions 2–237 (IKLNNVTFRY…EKIIEIAKIA (236 aa)) constitute an ABC transporter domain. Position 37 to 44 (37 to 44 (GHNGSGKS)) interacts with ATP.

The protein belongs to the ABC transporter superfamily. Energy-coupling factor EcfA family. In terms of assembly, forms a stable energy-coupling factor (ECF) transporter complex composed of 2 membrane-embedded substrate-binding proteins (S component), 2 ATP-binding proteins (A component) and 2 transmembrane proteins (T component).

Its subcellular location is the cell membrane. In terms of biological role, ATP-binding (A) component of a common energy-coupling factor (ECF) ABC-transporter complex. Unlike classic ABC transporters this ECF transporter provides the energy necessary to transport a number of different substrates. This chain is Energy-coupling factor transporter ATP-binding protein EcfA1, found in Mycoplasmopsis synoviae (strain 53) (Mycoplasma synoviae).